A 424-amino-acid polypeptide reads, in one-letter code: Serine--tRNA ligase (424 aa).

228-230 (TAE) is a binding site for L-serine. 259–261 (RSE) lines the ATP pocket. Glu-282 is an L-serine binding site. 346-349 (EISS) is an ATP binding site. Ser-382 lines the L-serine pocket.

It belongs to the class-II aminoacyl-tRNA synthetase family. Type-1 seryl-tRNA synthetase subfamily. Homodimer. The tRNA molecule binds across the dimer.

It is found in the cytoplasm. The enzyme catalyses tRNA(Ser) + L-serine + ATP = L-seryl-tRNA(Ser) + AMP + diphosphate + H(+). It catalyses the reaction tRNA(Sec) + L-serine + ATP = L-seryl-tRNA(Sec) + AMP + diphosphate + H(+). Its pathway is aminoacyl-tRNA biosynthesis; selenocysteinyl-tRNA(Sec) biosynthesis; L-seryl-tRNA(Sec) from L-serine and tRNA(Sec): step 1/1. Catalyzes the attachment of serine to tRNA(Ser). Is also able to aminoacylate tRNA(Sec) with serine, to form the misacylated tRNA L-seryl-tRNA(Sec), which will be further converted into selenocysteinyl-tRNA(Sec). The polypeptide is Serine--tRNA ligase (Rhodospirillum centenum (strain ATCC 51521 / SW)).